The sequence spans 89 residues: Small ribosomal subunit protein bS20 (89 aa).

The protein belongs to the bacterial ribosomal protein bS20 family.

Its function is as follows. Binds directly to 16S ribosomal RNA. The polypeptide is Small ribosomal subunit protein bS20 (Helicobacter pylori (strain ATCC 700392 / 26695) (Campylobacter pylori)).